We begin with the raw amino-acid sequence, 293 residues long: Pyridoxal 5'-phosphate synthase subunit PdxS (293 aa).

Position 23 (D23) interacts with D-ribose 5-phosphate. Residue K80 is the Schiff-base intermediate with D-ribose 5-phosphate of the active site. G152 is a binding site for D-ribose 5-phosphate. Residue R164 coordinates D-glyceraldehyde 3-phosphate. Residues G213 and G234 to S235 contribute to the D-ribose 5-phosphate site.

It belongs to the PdxS/SNZ family. As to quaternary structure, in the presence of PdxT, forms a dodecamer of heterodimers.

It carries out the reaction aldehydo-D-ribose 5-phosphate + D-glyceraldehyde 3-phosphate + L-glutamine = pyridoxal 5'-phosphate + L-glutamate + phosphate + 3 H2O + H(+). It functions in the pathway cofactor biosynthesis; pyridoxal 5'-phosphate biosynthesis. Functionally, catalyzes the formation of pyridoxal 5'-phosphate from ribose 5-phosphate (RBP), glyceraldehyde 3-phosphate (G3P) and ammonia. The ammonia is provided by the PdxT subunit. Can also use ribulose 5-phosphate and dihydroxyacetone phosphate as substrates, resulting from enzyme-catalyzed isomerization of RBP and G3P, respectively. This Methanothermobacter thermautotrophicus (strain ATCC 29096 / DSM 1053 / JCM 10044 / NBRC 100330 / Delta H) (Methanobacterium thermoautotrophicum) protein is Pyridoxal 5'-phosphate synthase subunit PdxS.